The chain runs to 181 residues: Nucleoside diphosphate kinase, mitochondrial (181 aa).

Over residues 1 to 10 the composition is skewed to basic residues; sequence MFRGGTHRLR. A disordered region spans residues 1-22; sequence MFRGGTHRLRGQPGLSLPHGPR. The transit peptide at 1-24 directs the protein to the mitochondrion; sequence MFRGGTHRLRGQPGLSLPHGPRCY. 6 residues coordinate ATP: lysine 40, phenylalanine 88, arginine 116, threonine 122, arginine 133, and asparagine 143. The active-site Pros-phosphohistidine intermediate is the histidine 146.

This sequence belongs to the NDK family. Mg(2+) serves as cofactor. As to expression, highest levels in the liver and kidney with lower levels in the heart, brain and breast muscle.

It is found in the mitochondrion intermembrane space. The protein localises to the mitochondrion matrix. The enzyme catalyses a 2'-deoxyribonucleoside 5'-diphosphate + ATP = a 2'-deoxyribonucleoside 5'-triphosphate + ADP. It carries out the reaction a ribonucleoside 5'-diphosphate + ATP = a ribonucleoside 5'-triphosphate + ADP. Feedback inhibition by ADP. Major role in the synthesis of nucleoside triphosphates other than ATP. The ATP gamma phosphate is transferred to the NDP beta phosphate via a ping-pong mechanism, using a phosphorylated active-site intermediate. Through the catalyzed exchange of gamma-phosphate between di- and triphosphonucleosides participates in regulation of intracellular nucleotide homeostasis. Binds to anionic phospholipids, predominantly to cardiolipin; the binding inhibits its phosphotransfer activity. Acts as a mitochondria-specific NDK coupled to respiration. Promotes the redistribution of cardiolipin between the mitochondrial inner membrane and outer membrane which is implicated in pro-apoptotic signaling. This chain is Nucleoside diphosphate kinase, mitochondrial (NME4), found in Columba livia (Rock dove).